The following is an 870-amino-acid chain: Leucine--tRNA ligase (870 aa).

A 'HIGH' region motif is present at residues 43–53 (PYPSGRIHMGH). Positions 630–634 (KMSKS) match the 'KMSKS' region motif. ATP is bound at residue Lys-633.

Belongs to the class-I aminoacyl-tRNA synthetase family.

It localises to the cytoplasm. It catalyses the reaction tRNA(Leu) + L-leucine + ATP = L-leucyl-tRNA(Leu) + AMP + diphosphate. The sequence is that of Leucine--tRNA ligase from Parvibaculum lavamentivorans (strain DS-1 / DSM 13023 / NCIMB 13966).